Reading from the N-terminus, the 101-residue chain is Putative defensin-like protein 307 (101 aa).

An N-terminal signal peptide occupies residues 1-22 (MEKSALIFIGILLFSTCTSIMA). 3 cysteine pairs are disulfide-bonded: Cys29–Cys49, Cys35–Cys54, and Cys40–Cys56.

It belongs to the DEFL family.

It is found in the secreted. The chain is Putative defensin-like protein 307 from Arabidopsis thaliana (Mouse-ear cress).